The chain runs to 743 residues: Putative cation exchanger C3A12.06c (743 aa).

13 consecutive transmembrane segments (helical) span residues 13–33 (LILLWCILGIAYILFWTHRIS), 109–129 (FPVLSIIVGWLIFLFITIGIS), 138–158 (LVTISWLLQLPDSVVGVTFLA), 182–202 (IGELLGSAFFIVAIVAGSVCL), 213–233 (FLRDVAFLTGTILLVIMFVLH), 239–258 (IWQSLVMILYYLLYVLFVFF), 528–548 (LRLLQCVFVPFAFVTFSITGG), 551–571 (LYIYAASSVFSILCITALYYY), 580–600 (FLPWVSFIGFVLGIIWISTIA), 609–629 (ALGVIFNLNESILGLTVFAAG), 649–669 (MAMGGVFGGPTLNILIGIGIS), 690–710 (LSITAYFLLACLLLLLIYVPL), and 718–738 (VLGLLLFILYIVGTSTNIVVE).

This sequence belongs to the Ca(2+):cation antiporter (CaCA) (TC 2.A.19) family.

It localises to the endoplasmic reticulum membrane. In terms of biological role, putative cation exchanger. This chain is Putative cation exchanger C3A12.06c, found in Schizosaccharomyces pombe (strain 972 / ATCC 24843) (Fission yeast).